We begin with the raw amino-acid sequence, 133 residues long: Small ribosomal subunit protein uS9 (133 aa).

Residues 98–113 show a composition bias toward basic and acidic residues; it reads RKPLKTEGHLSRDPRA. The segment at 98-133 is disordered; it reads RKPLKTEGHLSRDPRAKERRKYGLKKARKAPQFSKR. A compositionally biased stretch (basic residues) spans 114-133; it reads KERRKYGLKKARKAPQFSKR.

This sequence belongs to the universal ribosomal protein uS9 family.

This is Small ribosomal subunit protein uS9 from Parasynechococcus marenigrum (strain WH8102).